Consider the following 595-residue polypeptide: DNA primase (595 aa).

The CHC2-type zinc finger occupies 38-62; it reads CPFHQEKTPSFTVSNSKRFFYCFGC. The region spanning 250–332 is the Toprim domain; the sequence is NHSILVEGYF…EKKISFIRLP (83 aa). Positions 256, 300, and 302 each coordinate Mg(2+).

This sequence belongs to the DnaG primase family. As to quaternary structure, monomer. Interacts with DnaB. It depends on Zn(2+) as a cofactor. Mg(2+) serves as cofactor.

It catalyses the reaction ssDNA + n NTP = ssDNA/pppN(pN)n-1 hybrid + (n-1) diphosphate.. RNA polymerase that catalyzes the synthesis of short RNA molecules used as primers for DNA polymerase during DNA replication. The sequence is that of DNA primase from Rickettsia conorii (strain ATCC VR-613 / Malish 7).